Here is a 209-residue protein sequence, read N- to C-terminus: Thiamine-phosphate synthase (209 aa).

4-amino-2-methyl-5-(diphosphooxymethyl)pyrimidine contacts are provided by residues 32–36 and Asp64; that span reads QLRMK. Residues Asp65 and Asp84 each contribute to the Mg(2+) site. Residue Thr103 coordinates 4-amino-2-methyl-5-(diphosphooxymethyl)pyrimidine. 129 to 131 is a binding site for 2-[(2R,5Z)-2-carboxy-4-methylthiazol-5(2H)-ylidene]ethyl phosphate; the sequence is TTT. Lys132 lines the 4-amino-2-methyl-5-(diphosphooxymethyl)pyrimidine pocket. Gly165 contacts 2-[(2R,5Z)-2-carboxy-4-methylthiazol-5(2H)-ylidene]ethyl phosphate.

The protein belongs to the thiamine-phosphate synthase family. Mg(2+) is required as a cofactor.

The enzyme catalyses 2-[(2R,5Z)-2-carboxy-4-methylthiazol-5(2H)-ylidene]ethyl phosphate + 4-amino-2-methyl-5-(diphosphooxymethyl)pyrimidine + 2 H(+) = thiamine phosphate + CO2 + diphosphate. It catalyses the reaction 2-(2-carboxy-4-methylthiazol-5-yl)ethyl phosphate + 4-amino-2-methyl-5-(diphosphooxymethyl)pyrimidine + 2 H(+) = thiamine phosphate + CO2 + diphosphate. It carries out the reaction 4-methyl-5-(2-phosphooxyethyl)-thiazole + 4-amino-2-methyl-5-(diphosphooxymethyl)pyrimidine + H(+) = thiamine phosphate + diphosphate. The protein operates within cofactor biosynthesis; thiamine diphosphate biosynthesis; thiamine phosphate from 4-amino-2-methyl-5-diphosphomethylpyrimidine and 4-methyl-5-(2-phosphoethyl)-thiazole: step 1/1. In terms of biological role, condenses 4-methyl-5-(beta-hydroxyethyl)thiazole monophosphate (THZ-P) and 2-methyl-4-amino-5-hydroxymethyl pyrimidine pyrophosphate (HMP-PP) to form thiamine monophosphate (TMP). The chain is Thiamine-phosphate synthase from Bacteroides thetaiotaomicron (strain ATCC 29148 / DSM 2079 / JCM 5827 / CCUG 10774 / NCTC 10582 / VPI-5482 / E50).